Here is a 318-residue protein sequence, read N- to C-terminus: Non-homologous end joining protein Ku (318 aa).

The 184-residue stretch at 10-193 (AFGLVNVPVK…EVQIKPAELK (184 aa)) folds into the Ku domain. Residues 259–318 (SVKARKGGKSDSKDDSDSESDSKESKSDSKPAKKAPAKKAAAKKSTAKKAPAKKAAAKKS) form a disordered region. Residues 266–289 (GKSDSKDDSDSESDSKESKSDSKP) show a composition bias toward basic and acidic residues. Over residues 290–318 (AKKAPAKKAAAKKSTAKKAPAKKAAAKKS) the composition is skewed to basic residues.

The protein belongs to the prokaryotic Ku family. In terms of assembly, homodimer. Interacts with Sir2 and probably also with LigD; may form a trimeric complex during NHEJ.

Its function is as follows. With LigD forms a non-homologous end joining (NHEJ) repair enzyme which repairs blunt-end and 5'-overhang double strand breaks (DSB) with about 50% fidelity, and DSB with non-complementary 3' ends. Plays a partial role in NHEJ on 3'-overhang repair of complementary ends. NHEJ repairs DSB with blunt ends and 5' overhangs with a high level of nucleotide insertion/deletion, without a need for microhomology. This protein but not LigD also suppresses homologous recombination. Overexpression dramatically increases the efficiency of NHEJ with no effect on repair fidelity. The protein is Non-homologous end joining protein Ku of Mycolicibacterium smegmatis (strain ATCC 700084 / mc(2)155) (Mycobacterium smegmatis).